The following is a 171-amino-acid chain: Small ribosomal subunit protein uS5 (171 aa).

Residues 15–78 enclose the S5 DRBM domain; sequence LEEKVVKINR…EKAKKQLVRI (64 aa).

Belongs to the universal ribosomal protein uS5 family. As to quaternary structure, part of the 30S ribosomal subunit. Contacts proteins S4 and S8.

With S4 and S12 plays an important role in translational accuracy. Functionally, located at the back of the 30S subunit body where it stabilizes the conformation of the head with respect to the body. The polypeptide is Small ribosomal subunit protein uS5 (Onion yellows phytoplasma (strain OY-M)).